Reading from the N-terminus, the 915-residue chain is Metabotropic glutamate receptor 7 (915 aa).

The signal sequence occupies residues 1–34 (MVQLGKLLRVLTLMKFPCCVLEVLLCVLAAAARG). Topologically, residues 35-590 (QEMYAPHSIR…IIKLEWHSPW (556 aa)) are extracellular. C67 and C109 are oxidised to a cystine. An N-linked (GlcNAc...) asparagine glycan is attached at N98. L-glutamate-binding positions include S159, 180-182 (AST), Y230, and D314. Cystine bridges form between C249–C541, C374–C390, C430–C437, C523–C542, C527–C545, C548–C560, and C563–C576. An L-glutamate-binding site is contributed by K407. 2 N-linked (GlcNAc...) asparagine glycosylation sites follow: N458 and N486. The N-linked (GlcNAc...) asparagine glycan is linked to N572. Residues 591-615 (AVIPVFLAMLGIIATIFVMATFIRY) traverse the membrane as a helical segment. Over 616–627 (NDTPIVRASGRE) the chain is Cytoplasmic. The chain crosses the membrane as a helical span at residues 628 to 648 (LSYVLLTGIFLCYIITFLMIA). Residues 649 to 654 (KPDVAV) are Extracellular-facing. The chain crosses the membrane as a helical span at residues 655–675 (CSFRRVFLGLGMCISYAALLT). The Cytoplasmic segment spans residues 676 to 702 (KTNRIYRIFEQGKKSVTAPRLISPTSQ). A helical transmembrane segment spans residues 703 to 723 (LAITSSLISVQLLGVFIWFGV). The Extracellular portion of the chain corresponds to 724–753 (DPPNIIIDYDEHKTMNPEQARGVLKCDITD). Residues 754–775 (LQIICSLGYSILLMVTCTVYAI) traverse the membrane as a helical segment. Residues 776–788 (KTRGVPENFNEAK) are Cytoplasmic-facing. The chain crosses the membrane as a helical span at residues 789–810 (PIGFTMYTTCIVWLAFIPIFFG). Residues 811 to 825 (TAQSAEKLYIQTTTL) lie on the Extracellular side of the membrane. The helical transmembrane segment at 826–850 (TISMNLSASVALGMLYMPKVYIIIF) threads the bilayer. The Cytoplasmic portion of the chain corresponds to 851–915 (HPELNVQKRK…KYVSYNNLVI (65 aa)). A disordered region spans residues 874 to 895 (SRLSHKPSDRPNGEAKTELCEN). Positions 879-892 (KPSDRPNGEAKTEL) are enriched in basic and acidic residues. Position 900 is a phosphoserine (S900).

It belongs to the G-protein coupled receptor 3 family. In terms of assembly, homodimer. Interacts with PICK1. In terms of tissue distribution, widely distributed throughout the brain.

The protein resides in the cell membrane. G-protein coupled receptor activated by glutamate that regulates axon outgrowth through the MAPK-cAMP-PKA signaling pathway during neuronal development. Ligand binding causes a conformation change that triggers signaling via guanine nucleotide-binding proteins (G proteins) and modulates the activity of downstream effectors, such as adenylate cyclase that it inhibits. In Rattus norvegicus (Rat), this protein is Metabotropic glutamate receptor 7 (Grm7).